A 160-amino-acid polypeptide reads, in one-letter code: MD-2-related lipid-recognition protein ROSY1 (160 aa).

The first 23 residues, 1–23 (MAISHTQLLLLLLVSLFFSPALC), serve as a signal peptide directing secretion.

In terms of assembly, interacts with SYT1. In terms of tissue distribution, expressed exclusively in roots, in epidermis and cortex cells of the root elongation zone, and lateral root cap cells at the root tip.

Its subcellular location is the cytoplasm. Its function is as follows. Involved in the regulation of gravitropic response and basipetal auxin transport in roots. Involved in salt stress tolerance. May facilitate membrane trafficking and asymmetric cell elongation via SYT1. Binds stigmasterol and dipalmitoyl phosphoethanolamine (DPPE) in vitro. This chain is MD-2-related lipid-recognition protein ROSY1, found in Arabidopsis thaliana (Mouse-ear cress).